The primary structure comprises 211 residues: ATP phosphoribosyltransferase (211 aa).

Belongs to the ATP phosphoribosyltransferase family. Short subfamily. Heteromultimer composed of HisG and HisZ subunits.

Its subcellular location is the cytoplasm. The catalysed reaction is 1-(5-phospho-beta-D-ribosyl)-ATP + diphosphate = 5-phospho-alpha-D-ribose 1-diphosphate + ATP. It functions in the pathway amino-acid biosynthesis; L-histidine biosynthesis; L-histidine from 5-phospho-alpha-D-ribose 1-diphosphate: step 1/9. Functionally, catalyzes the condensation of ATP and 5-phosphoribose 1-diphosphate to form N'-(5'-phosphoribosyl)-ATP (PR-ATP). Has a crucial role in the pathway because the rate of histidine biosynthesis seems to be controlled primarily by regulation of HisG enzymatic activity. This chain is ATP phosphoribosyltransferase, found in Ectopseudomonas mendocina (strain ymp) (Pseudomonas mendocina).